A 103-amino-acid polypeptide reads, in one-letter code: Enhancer of rudimentary homolog (103 aa).

The protein belongs to the E(R) family. Homodimer.

May have a role in the cell cycle. The sequence is that of Enhancer of rudimentary homolog from Caenorhabditis elegans.